The sequence spans 855 residues: Nuclear valosin-containing protein-like (855 aa).

The tract at residues 1–219 (MKPRPGVFVD…SLLESDKKRK (219 aa)) is interaction with RPL5. A Nucleolar localization signal motif is present at residues 49–52 (RRKR). K70 carries the post-translational modification N6-acetyllysine. The tract at residues 83–234 (LAKRARQDEE…KGNKRKTENL (152 aa)) is disordered. The Nuclear localization signal motif lies at 85-88 (KRAR). The span at 90 to 110 (DEEDEYTESYSDDDSNMEDYP) shows a compositional bias: acidic residues. 2 stretches are compositionally biased toward polar residues: residues 113-123 (QSANPMNSSLL) and 131-157 (SESV…SKTG). Residue S133 is modified to Phosphoserine. T137 carries the phosphothreonine modification. K155 carries the N6-acetyllysine modification. Phosphoserine is present on S190. K207 is covalently cross-linked (Glycyl lysine isopeptide (Lys-Gly) (interchain with G-Cter in SUMO2)). Phosphoserine occurs at positions 210 and 214. Basic residues predominate over residues 217–228 (KRKGRAKGKGNK). Residues 217 to 231 (KRKGRAKGKGNKRKT) carry the Nuclear localization signal motif. Positions 266-473 (VGGNDATLKE…LTPGFVGADL (208 aa)) are interaction with WDR74. 304-311 (GPPGCGKT) lines the ATP pocket. The interval 496–523 (QKKKPEIEGLPSEGDQEERLGAEPTSET) is disordered. 621–628 (GPPGCGKT) provides a ligand contact to ATP.

The protein belongs to the AAA ATPase family. In terms of assembly, interacts with NCL/nucleolin. Isoform 1 and isoform 2 interact with TERT and isoform 1 exhibits a higher binding affinity for TERT compared to isoform 2. Isoform 1 interacts with MTREX in an ATP-dependent manner; the interaction is required to associate NVL with nuclear RNA exosome. Isoform 1 interacts with RPL5 in an ATP-dependent manner. Interacts with WDR74 (through WDR repeats); the interaction is independent of RNA or pre-60S ribosome particles.

It is found in the nucleus. The protein resides in the nucleolus. The protein localises to the nucleoplasm. Functionally, participates in the assembly of the telomerase holoenzyme and effecting of telomerase activity via its interaction with TERT. Involved in both early and late stages of the pre-rRNA processing pathways. Spatiotemporally regulates 60S ribosomal subunit biogenesis in the nucleolus. Catalyzes the release of specific assembly factors, such as WDR74, from pre-60S ribosomal particles through the ATPase activity. This chain is Nuclear valosin-containing protein-like, found in Mus musculus (Mouse).